The primary structure comprises 898 residues: Sodium/hydrogen exchanger 5 (898 aa).

The Cytoplasmic portion of the chain corresponds to 1–3 (MLR). A helical transmembrane segment spans residues 4–24 (VALLLLPGLPLAGVGATEEPT). Over 25–47 (QEPGPLGEPPGLALFRWQWHEVE) the chain is Extracellular. A helical membrane pass occupies residues 48-68 (APYLVALWILVASLAKIVFHL). Topologically, residues 69–75 (SRKVTSL) are cytoplasmic. The helical transmembrane segment at 76–96 (VPESCLLILLGLALGGIVLAV) threads the bilayer. Residues 97 to 136 (AKKAEYQLEPGTFFLFLLPPIVLDSGYFMPSRLFFDNLGA) are Extracellular-facing. Residues 137–157 (ILTYAVVGTLWNAFTTGVALW) traverse the membrane as a helical segment. Topologically, residues 158–175 (GLQQAGLVAPRVQAGLLD) are cytoplasmic. The chain crosses the membrane as a helical span at residues 176 to 196 (FLLFGSLISAVDPVAVLAVFE). Topologically, residues 197–202 (EVHVNE) are extracellular. Residue Asn-201 is glycosylated (N-linked (GlcNAc...) asparagine). A helical membrane pass occupies residues 203 to 223 (TLFIIVFGESLLNDAVTVVLY). Topologically, residues 224–248 (KVCNSFVEMGSANVQATDYLKGVAS) are cytoplasmic. The helical transmembrane segment at 249–269 (LFVVSLGGAAVGLVFAFLLAL) threads the bilayer. The Extracellular portion of the chain corresponds to 270–278 (TTRFTKRVR). Residues 279 to 299 (IIEPLLVFLLAYAAYLTAEMA) traverse the membrane as a helical segment. Residues 300–333 (SLSAILAVTMCGLGCKKYVEANISHKSRTAVKYT) lie on the Cytoplasmic side of the membrane. The chain crosses the membrane as a helical span at residues 334–354 (MKTLASSAETVIFMLLGISAV). The Extracellular portion of the chain corresponds to 355–362 (DSSKWAWD). A helical transmembrane segment spans residues 363–383 (SGLVLGTLFFILFFRALGVVL). Topologically, residues 384–400 (QTWVLNQFRLVPLDKID) are cytoplasmic. Residues 401–421 (QVVMSYGGLRGAVAFALVILL) traverse the membrane as a helical segment. Residues 422 to 430 (DRTKVPAKD) are Extracellular-facing. A helical membrane pass occupies residues 431–451 (YFVATTIVVVFFTVIVQGLTI). Residues 452–898 (KPLVKWLRVK…CIQFNRGGRL (447 aa)) are Cytoplasmic-facing. 2 disordered regions span residues 660–692 (TKSK…RDLG) and 801–888 (ESLA…NSHW). A compositionally biased stretch (basic residues) spans 662–674 (SKPRPRKTGHKKK). The segment covering 856-867 (ESSADIPQQQEL) has biased composition (polar residues).

This sequence belongs to the monovalent cation:proton antiporter 1 (CPA1) transporter (TC 2.A.36) family. In terms of assembly, interacts with CHP1 and CHP2. Interacts with ARRB2; facilitates the endocytosis of SLC9A5 from the plasma membrane. Interacts with RACK1; this interaction positively regulates SLC9A5 activity and promotes SLC9A5 localization to focal adhesions. Interacts with SCAMP2; this interaction regulates SLC9A5 cell-surface targeting and SLC9A5 activity. In terms of processing, phosphorylated by PRKAA2; promotes its accumulation at the cell surface. Phosphorylated by CSNK2A1 in a manner favoring its beta-arrestin binding and endocytosis. Highly expressed in brain. Strongly expressed in the dentate gyrus.

It localises to the cell membrane. The protein resides in the recycling endosome membrane. It is found in the cell projection. Its subcellular location is the dendritic spine membrane. The protein localises to the synaptic cell membrane. It localises to the cell junction. The protein resides in the focal adhesion. It carries out the reaction Na(+)(in) + H(+)(out) = Na(+)(out) + H(+)(in). Plasma membrane Na(+)/H(+) antiporter. Mediates the electroneutral exchange of intracellular H(+) ions for extracellular Na(+) in 1:1 stoichiometry. Responsible for regulating intracellular pH homeostasis, in particular in neural tissues. Acts as a negative regulator of dendritic spine growth. Plays a role in postsynaptic remodeling and signaling. Can also contribute to organellar pH regulation, with consequences for receptor tyrosine kinase trafficking. The sequence is that of Sodium/hydrogen exchanger 5 (Slc9a5) from Rattus norvegicus (Rat).